Here is a 190-residue protein sequence, read N- to C-terminus: CASP-like protein 5A3 (190 aa).

Low complexity-rich tracts occupy residues 1–12 and 20–31; these read MRASRPAVHPVE and AAAEGPEAQVEG. Residues 1 to 31 are disordered; that stretch reads MRASRPAVHPVEAAPPPPAAAAEGPEAQVEG. Residues 1–50 lie on the Cytoplasmic side of the membrane; sequence MRASRPAVHPVEAAPPPPAAAAEGPEAQVEGAAHPRGVRMKDPPGAPGTP. The chain crosses the membrane as a helical span at residues 51 to 71; that stretch reads AGLGLRLAQAFFAAAALAVMA. The Extracellular portion of the chain corresponds to 72-81; that stretch reads STNDFPSVSA. Residues 82-102 traverse the membrane as a helical segment; sequence FSYLVAAAILQCLWSLLLAFV. Residues 103 to 126 are Cytoplasmic-facing; sequence DIYALLVKRSLRNARAVCIFTIGD. A helical transmembrane segment spans residues 127–147; the sequence is GITGTITLGAACASAGITVLI. Over 148–164 the chain is Extracellular; it reads GNDLNICAENHCASFET. A helical membrane pass occupies residues 165–185; that stretch reads ATALAFISWFALAPSCILNFW. Over 186-190 the chain is Cytoplasmic; that stretch reads SMASR.

It belongs to the Casparian strip membrane proteins (CASP) family. In terms of assembly, homodimer and heterodimers.

The protein localises to the cell membrane. This Zea mays (Maize) protein is CASP-like protein 5A3.